Here is a 313-residue protein sequence, read N- to C-terminus: uncharacterized protein (313 aa).

A divalent metal cation contacts are provided by His-8, His-10, Glu-126, His-180, His-207, and Asp-262.

Belongs to the metallo-dependent hydrolases superfamily. TatD-type hydrolase family. A divalent metal cation serves as cofactor.

Functionally, putative deoxyribonuclease. This is an uncharacterized protein from Saccharomyces cerevisiae (strain ATCC 204508 / S288c) (Baker's yeast).